Reading from the N-terminus, the 579-residue chain is Capsid vertex component 2 (579 aa).

The interaction with major capsid protein/MCP stretch occupies residues 1 to 50 (MTARYGFGSISFPNKCGIFLSTTKNFIAPNFPIHYWTAPAFELRGRMNPD).

This sequence belongs to the herpesviridae CVC2 protein family. As to quaternary structure, heterodimerizes with CVC1. Interacts with major capsid protein/MCP and triplex capsid protein 1/TRX1 at the pentamer vertices. Interacts with the large tegument protein/LTP.

Its subcellular location is the virion. It is found in the host nucleus. In terms of biological role, capsid vertex-specific component that plays a role during viral DNA encapsidation, assuring correct genome cleavage and presumably stabilizing capsids that contain full-length viral genomes. Participates in the interaction between the capsid and the tegument through interaction with the large tegument protein/LTP. The protein is Capsid vertex component 2 of Homo sapiens (Human).